The sequence spans 240 residues: DNA repair protein RecO (240 aa).

The protein belongs to the RecO family.

Involved in DNA repair and RecF pathway recombination. The protein is DNA repair protein RecO of Actinobacillus pleuropneumoniae serotype 3 (strain JL03).